Here is a 203-residue protein sequence, read N- to C-terminus: ATP-dependent Clp protease proteolytic subunit (203 aa).

Ser-100 acts as the Nucleophile in catalysis. The active site involves His-125.

The protein belongs to the peptidase S14 family. In terms of assembly, fourteen ClpP subunits assemble into 2 heptameric rings which stack back to back to give a disk-like structure with a central cavity, resembling the structure of eukaryotic proteasomes.

The protein localises to the cytoplasm. The enzyme catalyses Hydrolysis of proteins to small peptides in the presence of ATP and magnesium. alpha-casein is the usual test substrate. In the absence of ATP, only oligopeptides shorter than five residues are hydrolyzed (such as succinyl-Leu-Tyr-|-NHMec, and Leu-Tyr-Leu-|-Tyr-Trp, in which cleavage of the -Tyr-|-Leu- and -Tyr-|-Trp bonds also occurs).. Its function is as follows. Cleaves peptides in various proteins in a process that requires ATP hydrolysis. Has a chymotrypsin-like activity. Plays a major role in the degradation of misfolded proteins. The polypeptide is ATP-dependent Clp protease proteolytic subunit (Anaeromyxobacter dehalogenans (strain 2CP-1 / ATCC BAA-258)).